A 303-amino-acid chain; its full sequence is DCN1-like protein 3 (303 aa).

2 disordered regions span residues 1–41 (MGQC…HLSI) and 62–83 (EASQ…TGAE). Residue Gly2 is the site of N-myristoyl glycine attachment. The DCUN1 domain maps to 85–277 (SSVQRIEELF…LFDTFVEWEM (193 aa)). Residues 284-303 (EETKCIPCSGTDDQSTEGQT) are disordered. A compositionally biased stretch (polar residues) spans 294-303 (TDDQSTEGQT).

In terms of assembly, may interact (via the DCUN1 domain) with unneddylated cullins.

The protein localises to the cell membrane. The protein resides in the cytoplasm. It localises to the nucleus. Its subcellular location is the perinuclear region. Contributes to the neddylation of all cullins by transferring NEDD8 from N-terminally acetylated NEDD8-conjugating E2s enzyme to different cullin C-terminal domain-RBX complexes. At the cell membrane, can promote and as well inhibit cullins neddylation. In Xenopus tropicalis (Western clawed frog), this protein is DCN1-like protein 3.